The chain runs to 154 residues: 6,7-dimethyl-8-ribityllumazine synthase (154 aa).

5-amino-6-(D-ribitylamino)uracil contacts are provided by residues Trp-22, 56-58, and 80-82; these read AWE and CVV. A (2S)-2-hydroxy-3-oxobutyl phosphate-binding site is contributed by 85 to 86; that stretch reads DT. His-88 acts as the Proton donor in catalysis. Asn-113 contacts 5-amino-6-(D-ribitylamino)uracil. Arg-127 contacts (2S)-2-hydroxy-3-oxobutyl phosphate.

It belongs to the DMRL synthase family. In terms of assembly, forms an icosahedral capsid composed of 60 subunits, arranged as a dodecamer of pentamers.

It catalyses the reaction (2S)-2-hydroxy-3-oxobutyl phosphate + 5-amino-6-(D-ribitylamino)uracil = 6,7-dimethyl-8-(1-D-ribityl)lumazine + phosphate + 2 H2O + H(+). Its pathway is cofactor biosynthesis; riboflavin biosynthesis; riboflavin from 2-hydroxy-3-oxobutyl phosphate and 5-amino-6-(D-ribitylamino)uracil: step 1/2. Catalyzes the formation of 6,7-dimethyl-8-ribityllumazine by condensation of 5-amino-6-(D-ribitylamino)uracil with 3,4-dihydroxy-2-butanone 4-phosphate. This is the penultimate step in the biosynthesis of riboflavin. The sequence is that of 6,7-dimethyl-8-ribityllumazine synthase from Xylella fastidiosa (strain M23).